Consider the following 232-residue polypeptide: Large ribosomal subunit protein uL1 (232 aa).

It belongs to the universal ribosomal protein uL1 family. In terms of assembly, part of the 50S ribosomal subunit.

Functionally, binds directly to 23S rRNA. The L1 stalk is quite mobile in the ribosome, and is involved in E site tRNA release. Its function is as follows. Protein L1 is also a translational repressor protein, it controls the translation of the L11 operon by binding to its mRNA. This chain is Large ribosomal subunit protein uL1, found in Porphyromonas gingivalis (strain ATCC 33277 / DSM 20709 / CIP 103683 / JCM 12257 / NCTC 11834 / 2561).